An 82-amino-acid chain; its full sequence is Small ribosomal subunit protein bS18 (82 aa).

It belongs to the bacterial ribosomal protein bS18 family. As to quaternary structure, part of the 30S ribosomal subunit. Forms a tight heterodimer with protein bS6.

Its function is as follows. Binds as a heterodimer with protein bS6 to the central domain of the 16S rRNA, where it helps stabilize the platform of the 30S subunit. The chain is Small ribosomal subunit protein bS18 from Chlamydia pneumoniae (Chlamydophila pneumoniae).